A 399-amino-acid chain; its full sequence is MAKEKFSRNKPHVNIGTIGHVDHGKTTLTAAISAVLSRKGLAEMKDYDNIDNAPEEKERGITIATSHIEYETEKRHYAHVDCPGHADYVKNMITGAAQMDGAILVVSAADGPMPQTREHILLSRQVGVPYIVVFMNKADMVDDAELLELVEMEIRELLNEYNFPGDDTPIISGSALKALEEAKAGVDGEWSAKVLELMDKVDEYIPTPVRATDKDFLMPIEDVFSISGRGTVVTGRIEKGVVKVGDTIEIVGIKPTQTTTVTGVEMFRKEMEQGEAGDNVGVLLRGTKKEDVERGMVLCKPKSITPHTKFEGEVYILTKEEGGRHTPFFNNYRPQFYVRTTDVTGSITLPEGTEMVMPGDNVRISVELIAPVALEEGTRFAIREGGRTVGSGVVSKILA.

Positions 10 to 209 (KPHVNIGTIG…KVDEYIPTPV (200 aa)) constitute a tr-type G domain. A G1 region spans residues 19–26 (GHVDHGKT). Position 19–26 (19–26 (GHVDHGKT)) interacts with GTP. Position 26 (threonine 26) interacts with Mg(2+). The tract at residues 60 to 64 (GITIA) is G2. Residues 81 to 84 (DCPG) form a G3 region. GTP-binding positions include 81–85 (DCPGH) and 136–139 (NKAD). Residues 136 to 139 (NKAD) are G4. Residues 174–176 (SAL) are G5.

It belongs to the TRAFAC class translation factor GTPase superfamily. Classic translation factor GTPase family. EF-Tu/EF-1A subfamily. Monomer.

It is found in the cytoplasm. It carries out the reaction GTP + H2O = GDP + phosphate + H(+). In terms of biological role, GTP hydrolase that promotes the GTP-dependent binding of aminoacyl-tRNA to the A-site of ribosomes during protein biosynthesis. The protein is Elongation factor Tu of Campylobacter curvus (strain 525.92).